The sequence spans 544 residues: Chaperonin GroEL (544 aa).

Residues 29 to 32 (TIGP), 86 to 90 (DGTTT), G413, 478 to 480 (NAA), and D494 contribute to the ATP site.

The protein belongs to the chaperonin (HSP60) family. In terms of assembly, forms a cylinder of 14 subunits composed of two heptameric rings stacked back-to-back. Interacts with the co-chaperonin GroES.

It localises to the cytoplasm. The enzyme catalyses ATP + H2O + a folded polypeptide = ADP + phosphate + an unfolded polypeptide.. Its function is as follows. Together with its co-chaperonin GroES, plays an essential role in assisting protein folding. The GroEL-GroES system forms a nano-cage that allows encapsulation of the non-native substrate proteins and provides a physical environment optimized to promote and accelerate protein folding. This is Chaperonin GroEL from Exiguobacterium sp. (strain ATCC BAA-1283 / AT1b).